The chain runs to 1160 residues: Transcription factor tau 138 kDa subunit (1160 aa).

A disordered region spans residues 475-533 (PNSKKTPNKNKRKRQVKNSTNASVAGNISNPKRIKLEQHVSTAQEPKSAEDSPSSNGGT). The span at 480-490 (TPNKNKRKRQV) shows a compositional bias: basic residues. Polar residues-rich tracts occupy residues 491-504 (KNST…NISN) and 513-529 (HVST…SPSS). Ser546 is subject to Phosphoserine.

In terms of assembly, component of the TFIIIC complex composed of TFC1, TFC3, TFC4, TFC6, TFC7 and TFC8. The subunits are organized in two globular domains, tauA and tauB, connected by a proteolysis-sensitive and flexible linker. Interacts with TFC1, TFC4 and TFC6.

Its subcellular location is the nucleus. It is found in the mitochondrion. In terms of biological role, TFIIIC mediates tRNA and 5S RNA gene activation by binding to intragenic promoter elements. Upstream of the transcription start site, TFIIIC assembles the initiation complex TFIIIB-TFIIIC-tDNA, which is sufficient for RNA polymerase III recruitment and function. Part of the tauB domain of TFIIIC that binds boxB DNA promoter sites of tRNA and similar genes. TFC3 is essential for cell viability. Cooperates with TFC6 in DNA binding. The polypeptide is Transcription factor tau 138 kDa subunit (TFC3) (Saccharomyces cerevisiae (strain ATCC 204508 / S288c) (Baker's yeast)).